A 112-amino-acid chain; its full sequence is Photosystem II reaction center Psb28 protein (112 aa).

It belongs to the Psb28 family. In terms of assembly, part of the photosystem II complex.

The protein localises to the plastid. It localises to the cyanelle thylakoid membrane. The sequence is that of Photosystem II reaction center Psb28 protein from Cyanophora paradoxa.